Reading from the N-terminus, the 168-residue chain is Sec-independent protein translocase protein TatB (168 aa).

Residues 1–21 form a helical membrane-spanning segment; the sequence is MIDLGISKLALIGAVALIVIG.

The protein belongs to the TatB family. In terms of assembly, the Tat system comprises two distinct complexes: a TatABC complex, containing multiple copies of TatA, TatB and TatC subunits, and a separate TatA complex, containing only TatA subunits. Substrates initially bind to the TatABC complex, which probably triggers association of the separate TatA complex to form the active translocon.

The protein resides in the cell inner membrane. In terms of biological role, part of the twin-arginine translocation (Tat) system that transports large folded proteins containing a characteristic twin-arginine motif in their signal peptide across membranes. Together with TatC, TatB is part of a receptor directly interacting with Tat signal peptides. TatB may form an oligomeric binding site that transiently accommodates folded Tat precursor proteins before their translocation. The polypeptide is Sec-independent protein translocase protein TatB (Cupriavidus pinatubonensis (strain JMP 134 / LMG 1197) (Cupriavidus necator (strain JMP 134))).